A 565-amino-acid polypeptide reads, in one-letter code: 4-coumarate--CoA ligase-like 2 (565 aa).

ATP contacts are provided by S221, S222, G223, T224, T225, and K229. Residue F265 participates in (E)-4-coumaroyl-AMP binding. K286 is a binding site for CoA. Residues 288–359 form an SBD1 region; sequence DMAKLLSAVE…ENYPKVKILQ (72 aa). Residues G337, Q359, G360, and T364 each coordinate (E)-4-coumaroyl-AMP. Q359, G360, T364, D445, and R460 together coordinate ATP. The SBD2 stretch occupies residues 360–424; that stretch reads GYGLTESTAI…IRSPTVMKGY (65 aa). (E)-4-coumaroyl-AMP-binding residues include K462 and K466. Position 469 (G469) interacts with CoA. Residue K551 coordinates ATP. A Microbody targeting signal motif is present at residues 563-565; the sequence is SKL.

The protein belongs to the ATP-dependent AMP-binding enzyme family. Mg(2+) serves as cofactor.

It is found in the peroxisome. It catalyses the reaction (E)-4-coumarate + ATP + CoA = (E)-4-coumaroyl-CoA + AMP + diphosphate. The catalysed reaction is (E)-4-coumarate + ATP + H(+) = (E)-4-coumaroyl-AMP + diphosphate. It carries out the reaction (E)-4-coumaroyl-AMP + CoA = (E)-4-coumaroyl-CoA + AMP + H(+). Carboxylate--CoA ligase that may use 4-coumarate as substrate. Follows a two-step reaction mechanism, wherein the carboxylate substrate first undergoes adenylation by ATP, followed by a thioesterification in the presence of CoA to yield the final CoA thioester. This chain is 4-coumarate--CoA ligase-like 2, found in Arabidopsis thaliana (Mouse-ear cress).